Reading from the N-terminus, the 251-residue chain is Triosephosphate isomerase (251 aa).

A substrate-binding site is contributed by 9–11 (NWK). Catalysis depends on His95, which acts as the Electrophile. The Proton acceptor role is filled by Glu167. Residues Gly173, Ser212, and 233–234 (GG) each bind substrate.

It belongs to the triosephosphate isomerase family. As to quaternary structure, homodimer.

Its subcellular location is the cytoplasm. It carries out the reaction D-glyceraldehyde 3-phosphate = dihydroxyacetone phosphate. It functions in the pathway carbohydrate biosynthesis; gluconeogenesis. The protein operates within carbohydrate degradation; glycolysis; D-glyceraldehyde 3-phosphate from glycerone phosphate: step 1/1. Functionally, involved in the gluconeogenesis. Catalyzes stereospecifically the conversion of dihydroxyacetone phosphate (DHAP) to D-glyceraldehyde-3-phosphate (G3P). The sequence is that of Triosephosphate isomerase from Pseudomonas syringae pv. syringae (strain B728a).